The primary structure comprises 250 residues: 2,3-bisphosphoglycerate-dependent phosphoglycerate mutase (250 aa).

Substrate is bound by residues 10–17 (RHGESQWN), 23–24 (TG), R62, 89–92 (ERHY), K100, 116–117 (RR), and 185–186 (GN). The active-site Tele-phosphohistidine intermediate is the H11. Residue E89 is the Proton donor/acceptor of the active site.

It belongs to the phosphoglycerate mutase family. BPG-dependent PGAM subfamily. As to quaternary structure, homodimer.

It carries out the reaction (2R)-2-phosphoglycerate = (2R)-3-phosphoglycerate. Its pathway is carbohydrate degradation; glycolysis; pyruvate from D-glyceraldehyde 3-phosphate: step 3/5. Its function is as follows. Catalyzes the interconversion of 2-phosphoglycerate and 3-phosphoglycerate. This Shigella boydii serotype 4 (strain Sb227) protein is 2,3-bisphosphoglycerate-dependent phosphoglycerate mutase.